The primary structure comprises 237 residues: Ubiquinone biosynthesis O-methyltransferase (237 aa).

Arg38, Gly57, Asp78, and Met122 together coordinate S-adenosyl-L-methionine.

It belongs to the methyltransferase superfamily. UbiG/COQ3 family.

The catalysed reaction is a 3-demethylubiquinol + S-adenosyl-L-methionine = a ubiquinol + S-adenosyl-L-homocysteine + H(+). It catalyses the reaction a 3-(all-trans-polyprenyl)benzene-1,2-diol + S-adenosyl-L-methionine = a 2-methoxy-6-(all-trans-polyprenyl)phenol + S-adenosyl-L-homocysteine + H(+). It participates in cofactor biosynthesis; ubiquinone biosynthesis. Its function is as follows. O-methyltransferase that catalyzes the 2 O-methylation steps in the ubiquinone biosynthetic pathway. The sequence is that of Ubiquinone biosynthesis O-methyltransferase from Methylococcus capsulatus (strain ATCC 33009 / NCIMB 11132 / Bath).